The sequence spans 536 residues: Aminopeptidase (536 aa).

The signal sequence occupies residues 1-24 (MSNKNNLRYALGALALSVSAASLA). The 104-residue stretch at 152–255 (AGDVTAKVVP…ATYDNGVAWS (104 aa)) folds into the PA domain. Residue T196 is modified to Phosphothreonine. 2 residues coordinate Zn(2+): H296 and D308. The active-site Proton acceptor is the E340. The Zn(2+) site is built by E341, D369, and H467. Cysteines 465 and 470 form a disulfide.

Belongs to the peptidase M28 family. M28A subfamily. Requires Zn(2+) as cofactor.

The protein resides in the secreted. It catalyses the reaction Release of an N-terminal amino acid, Xaa-|-Yaa-, in which Xaa is preferably Leu, but may be other amino acids including Pro although not Arg or Lys, and Yaa may be Pro. Amino acid amides and methyl esters are also readily hydrolyzed, but rates on arylamides are exceedingly low.. A secreted aminopeptidase. Acts on free N-terminal amino groups with a very strong preference for Leu in the first position. The protein is Aminopeptidase of Pseudomonas aeruginosa (strain UCBPP-PA14).